A 100-amino-acid chain; its full sequence is Small ribosomal subunit protein uS14c (100 aa).

This sequence belongs to the universal ribosomal protein uS14 family. Part of the 30S ribosomal subunit.

The protein resides in the plastid. It localises to the chloroplast. Binds 16S rRNA, required for the assembly of 30S particles. The protein is Small ribosomal subunit protein uS14c of Angiopteris evecta (Mule's foot fern).